Consider the following 284-residue polypeptide: MEMO1 family protein YG5714_2180 (284 aa).

The protein belongs to the MEMO1 family.

The protein is MEMO1 family protein YG5714_2180 of Saccharolobus islandicus (strain Y.G.57.14 / Yellowstone #1) (Sulfolobus islandicus).